The primary structure comprises 81 residues: Small ribosomal subunit protein uS15 (81 aa).

Belongs to the universal ribosomal protein uS15 family. Part of the 30S ribosomal subunit. Forms a bridge to the 50S subunit in the 70S ribosome, contacting the 23S rRNA.

One of the primary rRNA binding proteins, it binds directly to 16S rRNA where it helps nucleate assembly of the platform of the 30S subunit by binding and bridging several RNA helices of the 16S rRNA. In terms of biological role, forms an intersubunit bridge (bridge B4) with the 23S rRNA of the 50S subunit in the ribosome. This chain is Small ribosomal subunit protein uS15, found in Mesomycoplasma hyorhinis (Mycoplasma hyorhinis).